The primary structure comprises 179 residues: Mediator of RNA polymerase II transcription subunit 29 (179 aa).

The protein belongs to the Mediator complex subunit 29 family. Component of the Mediator complex.

The protein resides in the nucleus. Component of the Mediator complex, a coactivator involved in the regulated transcription of nearly all RNA polymerase II-dependent genes. Mediator functions as a bridge to convey information from gene-specific regulatory proteins to the basal RNA polymerase II transcription machinery. Mediator is recruited to promoters by direct interactions with regulatory proteins and serves as a scaffold for the assembly of a functional preinitiation complex with RNA polymerase II and the general transcription factors. This is Mediator of RNA polymerase II transcription subunit 29 (med29) from Danio rerio (Zebrafish).